Consider the following 30-residue polypeptide: Uperin-6.1 (30 aa).

Expressed by the skin dorsal glands.

The protein localises to the secreted. This Uperoleia inundata (Floodplain toadlet) protein is Uperin-6.1.